The following is a 358-amino-acid chain: Alanine racemase (358 aa).

The active-site Proton acceptor; specific for D-alanine is K35. At K35 the chain carries N6-(pyridoxal phosphate)lysine. Position 130 (R130) interacts with substrate. Residue Y255 is the Proton acceptor; specific for L-alanine of the active site. Residue M303 coordinates substrate.

It belongs to the alanine racemase family. Pyridoxal 5'-phosphate serves as cofactor.

The catalysed reaction is L-alanine = D-alanine. The protein operates within amino-acid biosynthesis; D-alanine biosynthesis; D-alanine from L-alanine: step 1/1. In terms of biological role, catalyzes the interconversion of L-alanine and D-alanine. May also act on other amino acids. The sequence is that of Alanine racemase (alr) from Shewanella loihica (strain ATCC BAA-1088 / PV-4).